Reading from the N-terminus, the 688-residue chain is Sodium channel and clathrin linker 1 (688 aa).

N-acetylalanine is present on A2. Residues 59–673 (LIAEYEKHLE…SASQQLSVIT (615 aa)) adopt a coiled-coil conformation. S681 carries the phosphoserine modification.

Interacts with SCN10A and clathrin. Identified in a complex containing SCN10A, clathrin and SCLT1. In terms of tissue distribution, detected in small neurons in dorsal root ganglia. Detected in C-type fibers of sciatic nerve (at protein level).

The protein resides in the cytoplasm. It localises to the cytoskeleton. It is found in the microtubule organizing center. Its subcellular location is the centrosome. The protein localises to the centriole. Its function is as follows. Adapter protein that links SCN10A to clathrin. Regulates SCN10A channel activity, possibly by promoting channel internalization. In Rattus norvegicus (Rat), this protein is Sodium channel and clathrin linker 1 (Sclt1).